Reading from the N-terminus, the 797-residue chain is Complex I intermediate-associated protein 84, mitochondrial (797 aa).

The N-terminal 69 residues, Met-1 to Thr-69, are a transit peptide targeting the mitochondrion.

The protein localises to the mitochondrion. Chaperone protein involved in the assembly of the mitochondrial NADH:ubiquinone oxidoreductase complex (complex I). The protein is Complex I intermediate-associated protein 84, mitochondrial (cia84) of Neurospora crassa (strain ATCC 24698 / 74-OR23-1A / CBS 708.71 / DSM 1257 / FGSC 987).